A 284-amino-acid chain; its full sequence is Proteasome subunit beta 1 (284 aa).

Residues 1–56 (MASHDSYTGRLPGAFMNPGTSSFTEFLASYNPDLLPGRHMTALAGGMPGNVEAPHA) constitute a propeptide, removed in mature form; by autocatalysis. T57 serves as the catalytic Nucleophile.

This sequence belongs to the peptidase T1B family. In terms of assembly, the 20S proteasome core is composed of 14 alpha and 14 beta subunits that assemble into four stacked heptameric rings, resulting in a barrel-shaped structure. The two inner rings, each composed of seven catalytic beta subunits, are sandwiched by two outer rings, each composed of seven alpha subunits. The catalytic chamber with the active sites is on the inside of the barrel. Has a gated structure, the ends of the cylinder being occluded by the N-termini of the alpha-subunits. Is capped by the proteasome-associated ATPase, ARC.

The protein localises to the cytoplasm. It carries out the reaction Cleavage of peptide bonds with very broad specificity.. The protein operates within protein degradation; proteasomal Pup-dependent pathway. The formation of the proteasomal ATPase ARC-20S proteasome complex, likely via the docking of the C-termini of ARC into the intersubunit pockets in the alpha-rings, may trigger opening of the gate for substrate entry. Interconversion between the open-gate and close-gate conformations leads to a dynamic regulation of the 20S proteasome proteolysis activity. In terms of biological role, component of the proteasome core, a large protease complex with broad specificity involved in protein degradation. This chain is Proteasome subunit beta 1, found in Thermomonospora curvata (strain ATCC 19995 / DSM 43183 / JCM 3096 / KCTC 9072 / NBRC 15933 / NCIMB 10081 / Henssen B9).